The primary structure comprises 155 residues: 6,7-dimethyl-8-ribityllumazine synthase (155 aa).

5-amino-6-(D-ribitylamino)uracil-binding positions include Phe-26, 60-62 (ALE), and 84-86 (AVI). A (2S)-2-hydroxy-3-oxobutyl phosphate-binding site is contributed by 89–90 (ET). His-92 serves as the catalytic Proton donor. A 5-amino-6-(D-ribitylamino)uracil-binding site is contributed by Asn-117. Arg-131 contacts (2S)-2-hydroxy-3-oxobutyl phosphate.

This sequence belongs to the DMRL synthase family.

The catalysed reaction is (2S)-2-hydroxy-3-oxobutyl phosphate + 5-amino-6-(D-ribitylamino)uracil = 6,7-dimethyl-8-(1-D-ribityl)lumazine + phosphate + 2 H2O + H(+). It participates in cofactor biosynthesis; riboflavin biosynthesis; riboflavin from 2-hydroxy-3-oxobutyl phosphate and 5-amino-6-(D-ribitylamino)uracil: step 1/2. Its function is as follows. Catalyzes the formation of 6,7-dimethyl-8-ribityllumazine by condensation of 5-amino-6-(D-ribitylamino)uracil with 3,4-dihydroxy-2-butanone 4-phosphate. This is the penultimate step in the biosynthesis of riboflavin. This is 6,7-dimethyl-8-ribityllumazine synthase from Chromobacterium violaceum (strain ATCC 12472 / DSM 30191 / JCM 1249 / CCUG 213 / NBRC 12614 / NCIMB 9131 / NCTC 9757 / MK).